The sequence spans 92 residues: RNA-binding protein Hfq (92 aa).

The region spanning 9 to 68 is the Sm domain; the sequence is DPFLNALRRERVPVSVYLVNGIKLQGTIESFDQFVVLLRNTVSQMVYKHAISTVVPARNV. Residues 73–92 form a disordered region; it reads GGGYVQSNEGNQAEDDDVEQ.

Belongs to the Hfq family. Homohexamer.

RNA chaperone that binds small regulatory RNA (sRNAs) and mRNAs to facilitate mRNA translational regulation in response to envelope stress, environmental stress and changes in metabolite concentrations. Also binds with high specificity to tRNAs. The polypeptide is RNA-binding protein Hfq (Xanthomonas axonopodis pv. citri (strain 306)).